We begin with the raw amino-acid sequence, 448 residues long: Mitochondrial distribution and morphology protein 10 (448 aa).

Belongs to the MDM10 family. As to quaternary structure, component of the ER-mitochondria encounter structure (ERMES) or MDM complex, composed of MMM1, MDM10, MDM12 and MDM34. Associates with the mitochondrial outer membrane sorting assembly machinery SAM(core) complex.

The protein resides in the mitochondrion outer membrane. In terms of biological role, component of the ERMES/MDM complex, which serves as a molecular tether to connect the endoplasmic reticulum and mitochondria. Components of this complex are involved in the control of mitochondrial shape and protein biogenesis and may function in phospholipid exchange. MDM10 is involved in the late assembly steps of the general translocase of the mitochondrial outer membrane (TOM complex). Functions in the TOM40-specific route of the assembly of outer membrane beta-barrel proteins, including the association of TOM40 with the receptor TOM22 and small TOM proteins. Can associate with the SAM(core) complex as well as the MDM12-MMM1 complex, both involved in late steps of the major beta-barrel assembly pathway, that is responsible for biogenesis of all outer membrane beta-barrel proteins. May act as a switch that shuttles between both complexes and channels precursor proteins into the TOM40-specific pathway. Plays a role in mitochondrial morphology and in the inheritance of mitochondria. This Zygosaccharomyces rouxii (strain ATCC 2623 / CBS 732 / NBRC 1130 / NCYC 568 / NRRL Y-229) protein is Mitochondrial distribution and morphology protein 10.